Here is a 227-residue protein sequence, read N- to C-terminus: Cytochrome c oxidase subunit 2 (227 aa).

At 1–14 (MAYPLQLGLQDATS) the chain is on the mitochondrial intermembrane side. A helical transmembrane segment spans residues 15–45 (PIMEELMNFHDHTLMIVFLISSLVLYIISLM). Residues 46-59 (LTTKLTHTSTMDAQ) are Mitochondrial matrix-facing. The chain crosses the membrane as a helical span at residues 60-87 (EVETIWTILPAAILVLIALPSLRILYMM). Residues 88-227 (DEINNPVLTV…YFENWSASMI (140 aa)) are Mitochondrial intermembrane-facing. H161, C196, E198, C200, H204, and M207 together coordinate Cu cation. Residue E198 coordinates Mg(2+). Y218 is modified (phosphotyrosine).

Belongs to the cytochrome c oxidase subunit 2 family. In terms of assembly, component of the cytochrome c oxidase (complex IV, CIV), a multisubunit enzyme composed of 14 subunits. The complex is composed of a catalytic core of 3 subunits MT-CO1, MT-CO2 and MT-CO3, encoded in the mitochondrial DNA, and 11 supernumerary subunits COX4I, COX5A, COX5B, COX6A, COX6B, COX6C, COX7A, COX7B, COX7C, COX8 and NDUFA4, which are encoded in the nuclear genome. The complex exists as a monomer or a dimer and forms supercomplexes (SCs) in the inner mitochondrial membrane with NADH-ubiquinone oxidoreductase (complex I, CI) and ubiquinol-cytochrome c oxidoreductase (cytochrome b-c1 complex, complex III, CIII), resulting in different assemblies (supercomplex SCI(1)III(2)IV(1) and megacomplex MCI(2)III(2)IV(2)). Found in a complex with TMEM177, COA6, COX18, COX20, SCO1 and SCO2. Interacts with TMEM177 in a COX20-dependent manner. Interacts with COX20. Interacts with COX16. Cu cation is required as a cofactor.

It localises to the mitochondrion inner membrane. The catalysed reaction is 4 Fe(II)-[cytochrome c] + O2 + 8 H(+)(in) = 4 Fe(III)-[cytochrome c] + 2 H2O + 4 H(+)(out). Its function is as follows. Component of the cytochrome c oxidase, the last enzyme in the mitochondrial electron transport chain which drives oxidative phosphorylation. The respiratory chain contains 3 multisubunit complexes succinate dehydrogenase (complex II, CII), ubiquinol-cytochrome c oxidoreductase (cytochrome b-c1 complex, complex III, CIII) and cytochrome c oxidase (complex IV, CIV), that cooperate to transfer electrons derived from NADH and succinate to molecular oxygen, creating an electrochemical gradient over the inner membrane that drives transmembrane transport and the ATP synthase. Cytochrome c oxidase is the component of the respiratory chain that catalyzes the reduction of oxygen to water. Electrons originating from reduced cytochrome c in the intermembrane space (IMS) are transferred via the dinuclear copper A center (CU(A)) of subunit 2 and heme A of subunit 1 to the active site in subunit 1, a binuclear center (BNC) formed by heme A3 and copper B (CU(B)). The BNC reduces molecular oxygen to 2 water molecules using 4 electrons from cytochrome c in the IMS and 4 protons from the mitochondrial matrix. The polypeptide is Cytochrome c oxidase subunit 2 (MT-CO2) (Micaelamys namaquensis (Namaqua rock rat)).